A 174-amino-acid chain; its full sequence is Male-enhanced antigen 1 (174 aa).

2 disordered regions span residues 1 to 77 (MAAV…PVGD) and 94 to 123 (LHLP…IPMD). Composition is skewed to acidic residues over residues 38–48 (SSEEPEEEQEE), 65–77 (PEQE…PVGD), and 101–110 (LESEDEDEEG). Residue Ser-103 is modified to Phosphoserine.

May play an important role in spermatogenesis and/or testis development. This is Male-enhanced antigen 1 (MEA1) from Sus scrofa (Pig).